The following is a 713-amino-acid chain: MTAEPNKPCQIKRDYQQLINLYPATADTDAHYLSKLSIYQQRVFEAHSQQKLLILGQIGLGNGLELLSWWRTQANPSQRLLLKVFEPNPINAYELKSLWDQSLALVKETPFEPHLESKQASALECKPELSQLAQTLLDAEPTAIIGCQRLIFDDGRTTIDLHFGDIQTQLSSLSHSPMHPVQHWLILPHLLQALHHQSHWQMAKLSDDSATIATIGLSESSGLSETTVKRFQACGFTVSDINELATKALGINALGIHQPVTLINHQPDAVLLHERQVLRQQDVKAYAFNPMAAILSSATPSSIAIIGGGLASAHLALSLAERGQGAQVFCKDAELGQGASGNRQGAIYPLLTPENDELSRFFQQAFLFSRRRVQALTSAPAVNQTSISHDFCGVLQTAHDERSQLRLDKIIQGQPWPSEIAYAVDAEQANAIAKINLDKPGFFYPLGGWVCPFEYADAAIQKAMQLADVSVSLNTDILAIERQADGWVLLTEKERFGPFAQLVLANGAELTQFDASNKLQISPFRGQVSHVPAQFQLSQLATVLCANGYLTPSHQGLHCLGASYVKEPEHLDFCPQEQQENLMKMHESYPDHSWLEDIDMSGNNARVGVRMVTRDHFPMMGCAPDVPKILKDYEQHQLTKESRHYWQTTPAPLHQGLYILGGLGSRGLSSGPLAAECLAAQLCGEPIPLDKETLCKLNPNRMWLRKLLKGKAL.

A tRNA (mnm(5)s(2)U34)-methyltransferase region spans residues 1 to 300; sequence MTAEPNKPCQ…MAAILSSATP (300 aa). The interval 306-713 is FAD-dependent cmnm(5)s(2)U34 oxidoreductase; the sequence is IGGGLASAHL…LRKLLKGKAL (408 aa).

In the N-terminal section; belongs to the methyltransferase superfamily. tRNA (mnm(5)s(2)U34)-methyltransferase family. It in the C-terminal section; belongs to the DAO family. Requires FAD as cofactor.

The protein resides in the cytoplasm. The catalysed reaction is 5-aminomethyl-2-thiouridine(34) in tRNA + S-adenosyl-L-methionine = 5-methylaminomethyl-2-thiouridine(34) in tRNA + S-adenosyl-L-homocysteine + H(+). Functionally, catalyzes the last two steps in the biosynthesis of 5-methylaminomethyl-2-thiouridine (mnm(5)s(2)U) at the wobble position (U34) in tRNA. Catalyzes the FAD-dependent demodification of cmnm(5)s(2)U34 to nm(5)s(2)U34, followed by the transfer of a methyl group from S-adenosyl-L-methionine to nm(5)s(2)U34, to form mnm(5)s(2)U34. In Shewanella baltica (strain OS155 / ATCC BAA-1091), this protein is tRNA 5-methylaminomethyl-2-thiouridine biosynthesis bifunctional protein MnmC.